A 224-amino-acid polypeptide reads, in one-letter code: Ribonuclease HII (224 aa).

The 210-residue stretch at 1–210 (MKLGGIDEAG…LKKIEEKLQK (210 aa)) folds into the RNase H type-2 domain. The a divalent metal cation site is built by Asp7, Glu8, and Asp105.

Belongs to the RNase HII family. It depends on Mn(2+) as a cofactor. The cofactor is Mg(2+).

It is found in the cytoplasm. The enzyme catalyses Endonucleolytic cleavage to 5'-phosphomonoester.. Functionally, endonuclease that specifically degrades the RNA of RNA-DNA hybrids. This chain is Ribonuclease HII, found in Thermococcus sibiricus (strain DSM 12597 / MM 739).